The chain runs to 677 residues: Epithelial splicing regulatory protein 1 (677 aa).

3 consecutive RRM domains span residues 225-302 (TVVR…KATG), 326-406 (VIVR…RSTA), and 445-525 (DCVR…QCSA). At S543 the chain carries Phosphoserine. Residue R578 is modified to Omega-N-methylarginine.

It belongs to the ESRP family.

Its subcellular location is the nucleus. Its function is as follows. mRNA splicing factor that regulates the formation of epithelial cell-specific isoforms. Specifically regulates the expression of FGFR2-IIIb, an epithelial cell-specific isoform of FGFR2. Also regulates the splicing of CD44, CTNND1, ENAH, 3 transcripts that undergo changes in splicing during the epithelial-to-mesenchymal transition (EMT). Acts by directly binding specific sequences in mRNAs. Binds the GU-rich sequence motifs in the ISE/ISS-3, a cis-element regulatory region present in the mRNA of FGFR2. Regulates splicing and expression of genes involved in inner ear development, auditory hair cell differentiation, and cell fate specification in the cochlear epithelium. The protein is Epithelial splicing regulatory protein 1 (Esrp1) of Rattus norvegicus (Rat).